Reading from the N-terminus, the 879-residue chain is Oxysterol-binding protein-related protein 5 (879 aa).

A disordered region spans residues 1-73 (MKEEAFLRRR…TPSSATKVPP (73 aa)). Serine 12 is modified (phosphoserine). A coiled-coil region spans residues 93–123 (VTKKETLKAQKENYRQEKKRATRQLLSALTD). Residues 126–243 (VVIMADSLKI…WLDALELALR (118 aa)) enclose the PH domain. Positions 254–341 (KPGRDGEPGT…TPGAPVRRGT (88 aa)) are disordered. Basic and acidic residues-rich tracts occupy residues 300–309 (FSDKSERENP) and 316–325 (TQDHSRKTES). Residues 384–389 (LSRVVL), 446–449 (KPYN), and 478–479 (HH) contribute to the a 1,2-diacyl-sn-glycero-3-phospho-(1D-myo-inositol 4-phosphate) site. A 1,2-diacyl-sn-glycero-3-phospho-L-serine contacts are provided by residues 384 to 389 (LSRVVL) and asparagine 449. Serine 504 contacts a 1,2-diacyl-sn-glycero-3-phospho-L-serine. Lysine 670, glutamate 674, and arginine 678 together coordinate a 1,2-diacyl-sn-glycero-3-phospho-(1D-myo-inositol 4-phosphate). Residues 742-806 (TTFLGSPGPR…FVPGGESPCP (65 aa)) form a disordered region. Residue serine 747 is modified to Phosphoserine. Residues 750–765 (PRHERSGPDQRLRKAS) show a composition bias toward basic and acidic residues. The span at 766–783 (DQPSGHSQATESSGSTPE) shows a compositional bias: polar residues. Residues 860 to 878 (SWFLLCVFLACQLFINHIL) form a helical membrane-spanning segment.

This sequence belongs to the OSBP family. In terms of tissue distribution, ubiquitously expressed.

Its subcellular location is the endoplasmic reticulum membrane. Lipid transporter involved in lipid countertransport between the endoplasmic reticulum and the plasma membrane: specifically exchanges phosphatidylserine with phosphatidylinositol 4-phosphate (PI4P), delivering phosphatidylserine to the plasma membrane in exchange for PI4P, which is degraded by the SAC1/SACM1L phosphatase in the endoplasmic reticulum. Binds phosphatidylserine and PI4P in a mutually exclusive manner. May cooperate with NPC1 to mediate the exit of cholesterol from endosomes/lysosomes. Binds 25-hydroxycholesterol and cholesterol. The chain is Oxysterol-binding protein-related protein 5 (OSBPL5) from Homo sapiens (Human).